Here is a 46-residue protein sequence, read N- to C-terminus: Apamin (46 aa).

A signal peptide spans methionine 1–serine 27. Cystine bridges form between cysteine 28/cysteine 38 and cysteine 30/cysteine 42. Residues arginine 40 to arginine 41 are essential for toxin activity. Histidine 45 carries the histidine amide modification.

As to expression, expressed by the venom gland.

The protein localises to the secreted. Its function is as follows. Neurotoxin that blocks voltage-independent calcium-activated potassium channels (KCNN1=SK1, KCNN2=SK2, KCNN3=SK3). This Apis cerana cerana (Oriental honeybee) protein is Apamin.